The sequence spans 128 residues: NADPH-dependent 7-cyano-7-deazaguanine reductase (128 aa).

Cys-39 functions as the Thioimide intermediate in the catalytic mechanism. The active-site Proton donor is Asp-46. Substrate contacts are provided by residues 61–63 (IEL) and 80–81 (HE).

Belongs to the GTP cyclohydrolase I family. QueF type 1 subfamily.

The protein localises to the cytoplasm. It carries out the reaction 7-aminomethyl-7-carbaguanine + 2 NADP(+) = 7-cyano-7-deazaguanine + 2 NADPH + 3 H(+). It functions in the pathway tRNA modification; tRNA-queuosine biosynthesis. Functionally, catalyzes the NADPH-dependent reduction of 7-cyano-7-deazaguanine (preQ0) to 7-aminomethyl-7-deazaguanine (preQ1). The chain is NADPH-dependent 7-cyano-7-deazaguanine reductase from Magnetococcus marinus (strain ATCC BAA-1437 / JCM 17883 / MC-1).